The following is a 180-amino-acid chain: ATP synthase subunit delta (180 aa).

Belongs to the ATPase delta chain family. F-type ATPases have 2 components, F(1) - the catalytic core - and F(0) - the membrane proton channel. F(1) has five subunits: alpha(3), beta(3), gamma(1), delta(1), epsilon(1). F(0) has three main subunits: a(1), b(2) and c(10-14). The alpha and beta chains form an alternating ring which encloses part of the gamma chain. F(1) is attached to F(0) by a central stalk formed by the gamma and epsilon chains, while a peripheral stalk is formed by the delta and b chains.

The protein localises to the cell membrane. In terms of biological role, f(1)F(0) ATP synthase produces ATP from ADP in the presence of a proton or sodium gradient. F-type ATPases consist of two structural domains, F(1) containing the extramembraneous catalytic core and F(0) containing the membrane proton channel, linked together by a central stalk and a peripheral stalk. During catalysis, ATP synthesis in the catalytic domain of F(1) is coupled via a rotary mechanism of the central stalk subunits to proton translocation. Its function is as follows. This protein is part of the stalk that links CF(0) to CF(1). It either transmits conformational changes from CF(0) to CF(1) or is implicated in proton conduction. The polypeptide is ATP synthase subunit delta (Latilactobacillus sakei subsp. sakei (strain 23K) (Lactobacillus sakei subsp. sakei)).